Here is a 116-residue protein sequence, read N- to C-terminus: Large ribosomal subunit protein bL20 (116 aa).

The protein belongs to the bacterial ribosomal protein bL20 family.

Functionally, binds directly to 23S ribosomal RNA and is necessary for the in vitro assembly process of the 50S ribosomal subunit. It is not involved in the protein synthesizing functions of that subunit. This Hydrogenobaculum sp. (strain Y04AAS1) protein is Large ribosomal subunit protein bL20.